The following is a 146-amino-acid chain: Probable acetyltransferase HI_0677 (146 aa).

One can recognise an N-acetyltransferase domain in the interval 1–146; sequence MKLFKAEQWN…ERLFELSLSC (146 aa).

The sequence is that of Probable acetyltransferase HI_0677 from Haemophilus influenzae (strain ATCC 51907 / DSM 11121 / KW20 / Rd).